We begin with the raw amino-acid sequence, 260 residues long: Alpha-acetolactate decarboxylase (260 aa).

Belongs to the alpha-acetolactate decarboxylase family.

It carries out the reaction (2S)-2-acetolactate + H(+) = (R)-acetoin + CO2. The protein operates within polyol metabolism; (R,R)-butane-2,3-diol biosynthesis; (R,R)-butane-2,3-diol from pyruvate: step 2/3. In terms of biological role, converts acetolactate into acetoin. The chain is Alpha-acetolactate decarboxylase (budA) from Methylococcus capsulatus (strain ATCC 33009 / NCIMB 11132 / Bath).